The primary structure comprises 533 residues: UDP-glucuronosyltransferase 1-2 (533 aa).

The first 27 residues, 1 to 27, serve as a signal peptide directing secretion; sequence MDTGLCAPLRGLSGLLLLLCALPWAEG. N-linked (GlcNAc...) asparagine glycosylation is found at N133, N141, N295, and N433. Residues 491–507 form a helical membrane-spanning segment; sequence VIGFLLAIVLTVVFIVY.

It belongs to the UDP-glycosyltransferase family.

Its subcellular location is the microsome. It is found in the endoplasmic reticulum membrane. It carries out the reaction glucuronate acceptor + UDP-alpha-D-glucuronate = acceptor beta-D-glucuronoside + UDP + H(+). In terms of biological role, UDPGT is of major importance in the conjugation and subsequent elimination of potentially toxic xenobiotics and endogenous compounds. In Rattus norvegicus (Rat), this protein is UDP-glucuronosyltransferase 1-2 (Ugt1a2).